A 333-amino-acid polypeptide reads, in one-letter code: S-adenosylmethionine decarboxylase proenzyme (333 aa).

Residue Phe7 participates in substrate binding. Residues Glu8 and Glu11 contribute to the active site. Substrate is bound at residue Glu67. The active-site Schiff-base intermediate with substrate; via pyruvic acid is the Ser68. Pyruvic acid (Ser); by autocatalysis is present on Ser68. The active-site Proton donor; for catalytic activity is Cys82. Phe223 provides a ligand contact to substrate. Residues Ser229 and His243 each act as proton acceptor; for processing activity in the active site. Residue Glu247 participates in substrate binding. Ser298 bears the Phosphoserine mark.

Belongs to the eukaryotic AdoMetDC family. As to quaternary structure, heterotetramer of two alpha and two beta chains. Pyruvate is required as a cofactor. In terms of processing, is synthesized initially as an inactive proenzyme. Formation of the active enzyme involves a self-maturation process in which the active site pyruvoyl group is generated from an internal serine residue via an autocatalytic post-translational modification. Two non-identical subunits are generated from the proenzyme in this reaction, and the pyruvate is formed at the N-terminus of the alpha chain, which is derived from the carboxyl end of the proenzyme. The post-translation cleavage follows an unusual pathway, termed non-hydrolytic serinolysis, in which the side chain hydroxyl group of the serine supplies its oxygen atom to form the C-terminus of the beta chain, while the remainder of the serine residue undergoes an oxidative deamination to produce ammonia and the pyruvoyl group blocking the N-terminus of the alpha chain.

It carries out the reaction S-adenosyl-L-methionine + H(+) = S-adenosyl 3-(methylsulfanyl)propylamine + CO2. The protein operates within amine and polyamine biosynthesis; S-adenosylmethioninamine biosynthesis; S-adenosylmethioninamine from S-adenosyl-L-methionine: step 1/1. Functionally, essential for biosynthesis of the polyamines spermidine and spermine. Promotes maintenance and self-renewal of embryonic stem cells, by maintaining spermine levels. This chain is S-adenosylmethionine decarboxylase proenzyme (Amd1), found in Rattus norvegicus (Rat).